Here is a 134-residue protein sequence, read N- to C-terminus: Profilin-3 (134 aa).

Cysteine 13 and cysteine 118 are oxidised to a cystine. The Involved in PIP2 interaction signature appears at 84–100; the sequence is AVIRGKKGSGGITIKKT. Threonine 114 carries the post-translational modification Phosphothreonine.

Belongs to the profilin family. As to quaternary structure, occurs in many kinds of cells as a complex with monomeric actin in a 1:1 ratio. In terms of processing, phosphorylated by MAP kinases.

Its subcellular location is the cytoplasm. The protein resides in the cytoskeleton. Its function is as follows. Binds to actin and affects the structure of the cytoskeleton. At high concentrations, profilin prevents the polymerization of actin, whereas it enhances it at low concentrations. In Olea europaea (Common olive), this protein is Profilin-3.